We begin with the raw amino-acid sequence, 318 residues long: NADH-ubiquinone oxidoreductase chain 1 (318 aa).

The next 8 helical transmembrane spans lie at 5 to 25, 69 to 89, 102 to 122, 148 to 168, 174 to 194, 215 to 235, 253 to 273, and 293 to 313; these read IISS…LTLI, SIFL…ILWI, LGLM…LTSG, LGLM…KLFI, IWLL…TLAE, VEFS…NILF, LYFS…FLWV, and FLPI…FFGV.

The protein belongs to the complex I subunit 1 family.

The protein localises to the mitochondrion inner membrane. The catalysed reaction is a ubiquinone + NADH + 5 H(+)(in) = a ubiquinol + NAD(+) + 4 H(+)(out). In terms of biological role, core subunit of the mitochondrial membrane respiratory chain NADH dehydrogenase (Complex I) that is believed to belong to the minimal assembly required for catalysis. Complex I functions in the transfer of electrons from NADH to the respiratory chain. The immediate electron acceptor for the enzyme is believed to be ubiquinone. In Myxine glutinosa (Atlantic hagfish), this protein is NADH-ubiquinone oxidoreductase chain 1 (MT-ND1).